Reading from the N-terminus, the 445-residue chain is Methionine aminopeptidase 2 (445 aa).

The tract at residues 1–76 (MAAQVASGVG…KKKCTSKVQT (76 aa)) is disordered. A compositionally biased stretch (basic residues) spans 57 to 71 (AKKKKKKTKKKKKCT). H195 is a binding site for substrate. A divalent metal cation is bound by residues D215, D226, and H295. H303 provides a ligand contact to substrate. A divalent metal cation is bound by residues E331 and E426.

The protein belongs to the peptidase M24A family. Methionine aminopeptidase eukaryotic type 2 subfamily. Requires Co(2+) as cofactor. Zn(2+) is required as a cofactor. It depends on Mn(2+) as a cofactor. Fe(2+) serves as cofactor.

Its subcellular location is the cytoplasm. It carries out the reaction Release of N-terminal amino acids, preferentially methionine, from peptides and arylamides.. Functionally, cotranslationally removes the N-terminal methionine from nascent proteins. The N-terminal methionine is often cleaved when the second residue in the primary sequence is small and uncharged (Met-Ala-, Cys, Gly, Pro, Ser, Thr, or Val). The chain is Methionine aminopeptidase 2 from Paracoccidioides lutzii (strain ATCC MYA-826 / Pb01) (Paracoccidioides brasiliensis).